Reading from the N-terminus, the 338-residue chain is HLA class I histocompatibility antigen, alpha chain G (338 aa).

Residues Met-1 to Ala-24 form the signal peptide. The interval Val-3–Leu-11 is VL9 epitope. The alpha-1 stretch occupies residues Gly-25–Ala-114. The Extracellular segment spans residues Gly-25 to Ile-308. Residues Tyr-31, His-94, Asn-101, and Tyr-108 each coordinate a peptide antigen. A glycan (N-linked (GlcNAc...) asparagine) is linked at Asn-110. The tract at residues Ser-115–Ala-206 is alpha-2. Cys-125 and Cys-188 are disulfide-bonded. Positions 167, 170, 179, 180, 183, and 195 each coordinate a peptide antigen. The alpha-3 stretch occupies residues Asp-207–Trp-298. The 91-residue stretch at Pro-209–Lys-299 folds into the Ig-like C1-type domain. A disulfide bridge connects residues Cys-227 and Cys-283. The connecting peptide stretch occupies residues Lys-299–Ile-308. Residues Met-309–Trp-332 traverse the membrane as a helical segment. The Cytoplasmic segment spans residues Arg-333–Asp-338. The short motif at Lys-334 to Ser-336 is the ER-retrieval signal element.

Belongs to the MHC class I family. Forms a heterotrimer with B2M and a self-peptide (peptide-bound HLA-G-B2M). HLA-G-B2M complex interacts with components of the antigen processing machinery TAPBP and TAP1-TAP2 complex; this interaction is required for loading of high affinity peptides and heterotrimer translocation to the cell surface. Interacts with CALCR; this interaction is required for appropriate folding. Interacts with COPB1; this interaction mediates the endoplasmic reticulum (ER) retrieval of HLA-G-B2M complexes that bind low affinity peptides. On the cell surface, peptide-bound HLA-G-B2M molecules (referred to as monomers) can form disulfide-linked homomultimers, homodimers and homotrimers. Interacts with KIR2DL4; this interaction is direct. Interacts with LILRB1 and LILRB2 receptors; this interaction is direct. Interacts with CD160; this interactions is direct. Interacts with CD8A homodimer; this interaction is direct and might down-regulate T cell receptor signaling. Isoform 2: Forms a non-disulfide-linked homodimer and interacts with LILRB2. Post-translationally, N-glycosylated. Produced by proteolytic cleavage at the cell surface (shedding) by matrix metalloproteinase MMP2. As to expression, expressed in adult eye. Expressed in immune cell subsets including monocytes, myeloid and plasmacytoid dendritic cells and regulatory T cells (Tr1)(at protein level). Secreted by follicular dendritic cell and follicular helper T cells. Detected in physiological fluids including amniotic fluid and serum. In terms of tissue distribution, expressed in placenta, amniotic membrane, skin, cord blood and peripheral blood mononuclear cells.

It localises to the cell membrane. The protein localises to the endoplasmic reticulum membrane. The protein resides in the early endosome membrane. Its subcellular location is the secreted. It is found in the early endosome. It localises to the cell projection. The protein localises to the filopodium membrane. Functionally, non-classical major histocompatibility class Ib molecule involved in immune regulatory processes at the maternal-fetal interface. In complex with B2M/beta-2 microglobulin binds a limited repertoire of nonamer self-peptides derived from intracellular proteins including histones and ribosomal proteins. Peptide-bound HLA-G-B2M complex acts as a ligand for inhibitory/activating KIR2DL4, LILRB1 and LILRB2 receptors on uterine immune cells to promote fetal development while maintaining maternal-fetal tolerance. Upon interaction with KIR2DL4 and LILRB1 receptors on decidual NK cells, it triggers NK cell senescence-associated secretory phenotype as a molecular switch to promote vascular remodeling and fetal growth in early pregnancy. Through interaction with KIR2DL4 receptor on decidual macrophages induces pro-inflammatory cytokine production mainly associated with tissue remodeling. Through interaction with LILRB2 receptor triggers differentiation of type 1 regulatory T cells and myeloid-derived suppressor cells, both of which actively maintain maternal-fetal tolerance. May play a role in balancing tolerance and antiviral-immunity at maternal-fetal interface by keeping in check the effector functions of NK, CD8+ T cells and B cells. Reprograms B cells toward an immune suppressive phenotype via LILRB1. May induce immune activation/suppression via intercellular membrane transfer (trogocytosis), likely enabling interaction with KIR2DL4, which resides mostly in endosomes. Through interaction with the inhibitory receptor CD160 on endothelial cells may control angiogenesis in immune privileged sites. Its function is as follows. Likely does not bind B2M and presents peptides. Negatively regulates NK cell- and CD8+ T cell-mediated cytotoxicity. In terms of biological role, non-classical major histocompatibility class Ib molecule involved in immune regulatory processes at the maternal-fetal interface. In complex with B2M/beta-2 microglobulin binds a limited repertoire of nonamer self-peptides derived from intracellular proteins including histones and ribosomal proteins. Peptide-bound HLA-G-B2M complex acts as a ligand for inhibitory/activating KIR2DL4, LILRB1 and LILRB2 receptors on uterine immune cells to promote fetal development while maintaining maternal-fetal tolerance. Upon interaction with KIR2DL4 and LILRB1 receptors on decidual NK cells, it triggers NK cell senescence-associated secretory phenotype as a molecular switch to promote vascular remodeling and fetal growth in early pregnancy. Through interaction with KIR2DL4 receptor on decidual macrophages induces pro-inflammatory cytokine production mainly associated with tissue remodeling. Through interaction with LILRB2 receptor triggers differentiation of type 1 regulatory T cells and myeloid-derived suppressor cells, both of which actively maintain maternal-fetal tolerance. Reprograms B cells toward an immune suppressive phenotype via LILRB1. Likely does not bind B2M and presents peptides. The chain is HLA class I histocompatibility antigen, alpha chain G from Homo sapiens (Human).